The chain runs to 122 residues: Large ribosomal subunit protein uL14 (122 aa).

It belongs to the universal ribosomal protein uL14 family. As to quaternary structure, part of the 50S ribosomal subunit. Forms a cluster with proteins L3 and L19. In the 70S ribosome, L14 and L19 interact and together make contacts with the 16S rRNA in bridges B5 and B8.

Its function is as follows. Binds to 23S rRNA. Forms part of two intersubunit bridges in the 70S ribosome. This is Large ribosomal subunit protein uL14 from Chromobacterium violaceum (strain ATCC 12472 / DSM 30191 / JCM 1249 / CCUG 213 / NBRC 12614 / NCIMB 9131 / NCTC 9757 / MK).